The primary structure comprises 1598 residues: Transposon Ty2-LR2 Gag-Pol polyprotein (1598 aa).

3 stretches are compositionally biased toward polar residues: residues 1–11, 19–39, and 49–60; these read MESQQLHQNPH, ASVT…SASN, and KVNSQEETTPGT. Disordered stretches follow at residues 1 to 88 and 359 to 449; these read MESQ…YQQH and QHSE…SNDE. Residues 295–397 form an RNA-binding region; the sequence is ENNINVSDRL…SSKPRAAKAH (103 aa). Over residues 369-381 the composition is skewed to low complexity; the sequence is TSPNTTNTKVTTR. Composition is skewed to polar residues over residues 399–408 and 415–435; these read IATSSKFSRV and ESTV…GQQQ. Catalysis depends on aspartate 457, which acts as the For protease activity; shared with dimeric partner. Residues 579-636 are integrase-type zinc finger-like; sequence NVNKSKSVNKYPYPLIHRMLGHANFRSIQKSLKKNAVTYLKESDIEWSNASTYQCPDC. In terms of domain architecture, Integrase catalytic spans 656 to 831; that stretch reads ESYEPFQYLH…AGLDITTILP (176 aa). Mg(2+) is bound by residues aspartate 667 and aspartate 732. 3 stretches are compositionally biased toward polar residues: residues 915 to 927, 1009 to 1034, and 1065 to 1082; these read SFIE…QSYD, ESDT…STNE, and QRNS…STPS. Disordered regions lie at residues 915–934, 1004–1034, 1059–1135, 1146–1165, and 1170–1205; these read SFIE…ESDH, MGGT…STNE, TEEP…KSSK, LPLP…VSKD, and HSRQ…TEIE. A compositionally biased stretch (basic and acidic residues) spans 1151 to 1165; sequence LTHKSPTDTSDVSKD. A Bipartite nuclear localization signal motif is present at residues 1193–1227; the sequence is KKRSLEDNETEIEVSRDTWNNKNMRSLEPPRSKKR. Residues 1353 to 1491 enclose the Reverse transcriptase Ty1/copia-type domain; sequence NDYYITQLDI…DILGLEIKYQ (139 aa). Mg(2+)-binding residues include aspartate 1361, aspartate 1442, and aspartate 1443.

In terms of assembly, the capsid protein forms a homotrimer, from which the VLPs are assembled. The protease is a homodimer, whose active site consists of two apposed aspartic acid residues. In terms of processing, initially, virus-like particles (VLPs) are composed of the structural unprocessed proteins Gag and Gag-Pol, and also contain the host initiator methionine tRNA (tRNA(i)-Met) which serves as a primer for minus-strand DNA synthesis, and a dimer of genomic Ty RNA. Processing of the polyproteins occurs within the particle and proceeds by an ordered pathway, called maturation. First, the protease (PR) is released by autocatalytic cleavage of the Gag-Pol polyprotein, and this cleavage is a prerequisite for subsequent processing at the remaining sites to release the mature structural and catalytic proteins. Maturation takes place prior to the RT reaction and is required to produce transposition-competent VLPs.

The protein localises to the cytoplasm. The protein resides in the nucleus. It carries out the reaction DNA(n) + a 2'-deoxyribonucleoside 5'-triphosphate = DNA(n+1) + diphosphate. The catalysed reaction is Endonucleolytic cleavage to 5'-phosphomonoester.. Its function is as follows. Capsid protein (CA) is the structural component of the virus-like particle (VLP), forming the shell that encapsulates the retrotransposons dimeric RNA genome. The particles are assembled from trimer-clustered units and there are holes in the capsid shells that allow for the diffusion of macromolecules. CA also has nucleocapsid-like chaperone activity, promoting primer tRNA(i)-Met annealing to the multipartite primer-binding site (PBS), dimerization of Ty2 RNA and initiation of reverse transcription. The aspartyl protease (PR) mediates the proteolytic cleavages of the Gag and Gag-Pol polyproteins after assembly of the VLP. In terms of biological role, reverse transcriptase/ribonuclease H (RT) is a multifunctional enzyme that catalyzes the conversion of the retro-elements RNA genome into dsDNA within the VLP. The enzyme displays a DNA polymerase activity that can copy either DNA or RNA templates, and a ribonuclease H (RNase H) activity that cleaves the RNA strand of RNA-DNA heteroduplexes during plus-strand synthesis and hydrolyzes RNA primers. The conversion leads to a linear dsDNA copy of the retrotransposon that includes long terminal repeats (LTRs) at both ends. Functionally, integrase (IN) targets the VLP to the nucleus, where a subparticle preintegration complex (PIC) containing at least integrase and the newly synthesized dsDNA copy of the retrotransposon must transit the nuclear membrane. Once in the nucleus, integrase performs the integration of the dsDNA into the host genome. This is Transposon Ty2-LR2 Gag-Pol polyprotein (TY2B-LR2) from Saccharomyces cerevisiae (strain ATCC 204508 / S288c) (Baker's yeast).